The primary structure comprises 285 residues: HTH-type transcriptional regulator MurR (285 aa).

Residues 1 to 77 (MLYLTKISNA…MALIGEYSAS (77 aa)) enclose the HTH rpiR-type domain. Positions 37-56 (SRQMAKQLGISQSSIVKFAQ) form a DNA-binding region, H-T-H motif. In terms of domain architecture, SIS spans 128 to 268 (IIEVISKAPF…FVGLVQLNDV (141 aa)).

Homotetramer.

It participates in amino-sugar metabolism; N-acetylmuramate degradation [regulation]. Represses the expression of the murPQ operon involved in the uptake and degradation of N-acetylmuramic acid (MurNAc). Binds to two adjacent inverted repeats within the operator region. MurNAc 6-phosphate, the substrate of MurQ, is the specific inducer that weakens binding of MurR to the operator. The chain is HTH-type transcriptional regulator MurR from Escherichia coli O139:H28 (strain E24377A / ETEC).